The chain runs to 283 residues: Foldase protein PrsA 3 (283 aa).

The N-terminal stretch at 1 to 21 (MKKKKIFIGTIISCVMLALSA) is a signal peptide. Residue Cys22 is the site of N-palmitoyl cysteine attachment. Residue Cys22 is the site of S-diacylglycerol cysteine attachment. Residues 132-222 (KPEMKVSHIL…YGYHIIKVTD (91 aa)) form the PpiC domain.

Belongs to the PrsA family.

The protein resides in the cell membrane. It catalyses the reaction [protein]-peptidylproline (omega=180) = [protein]-peptidylproline (omega=0). Its function is as follows. Plays a major role in protein secretion by helping the post-translocational extracellular folding of several secreted proteins. This is Foldase protein PrsA 3 (prsA3) from Bacillus cereus (strain ATCC 14579 / DSM 31 / CCUG 7414 / JCM 2152 / NBRC 15305 / NCIMB 9373 / NCTC 2599 / NRRL B-3711).